Consider the following 452-residue polypeptide: Ribosome biogenesis protein YTM1 (452 aa).

The segment at 17–98 (IVSQPVVFTT…EETLEIEYIE (82 aa)) is ubiquitin-like (UBL) domain. WD repeat units follow at residues 110–148 (PHED…TASI), 150–195 (AHPA…NPMA), and 208–247 (LHTA…TDEV). The disordered stretch occupies residues 245–269 (DEVPEPALNERDRSKKRRRVEEGEV). Positions 252–269 (LNERDRSKKRRRVEEGEV) are enriched in basic and acidic residues. 4 WD repeats span residues 282 to 322 (SHTA…CSHT), 325 to 364 (ASEK…TILT), 371 to 411 (MHPS…SAMA), and 418 to 452 (GSGQ…EQKV).

The protein belongs to the WD repeat WDR12/YTM1 family. In terms of assembly, component of the NOP7 complex, composed of ERB1, NOP7 and YTM1. The complex is held together by ERB1, which interacts with NOP7 via its N-terminal domain and with YTM1 via a high-affinity interaction between the seven-bladed beta-propeller domains of the 2 proteins. The NOP7 complex associates with the 66S pre-ribosome. Interacts (via UBL domain) with MDN1 (via VWFA/MIDAS domain).

It is found in the nucleus. The protein localises to the nucleolus. It localises to the nucleoplasm. In terms of biological role, component of the NOP7 complex, which is required for maturation of the 25S and 5.8S ribosomal RNAs and formation of the 60S ribosome. The chain is Ribosome biogenesis protein YTM1 from Laccaria bicolor (strain S238N-H82 / ATCC MYA-4686) (Bicoloured deceiver).